A 351-amino-acid chain; its full sequence is Histidinol-phosphate aminotransferase (351 aa).

Position 213 is an N6-(pyridoxal phosphate)lysine (Lys-213).

This sequence belongs to the class-II pyridoxal-phosphate-dependent aminotransferase family. Histidinol-phosphate aminotransferase subfamily. Homodimer. Pyridoxal 5'-phosphate serves as cofactor.

The enzyme catalyses L-histidinol phosphate + 2-oxoglutarate = 3-(imidazol-4-yl)-2-oxopropyl phosphate + L-glutamate. It functions in the pathway amino-acid biosynthesis; L-histidine biosynthesis; L-histidine from 5-phospho-alpha-D-ribose 1-diphosphate: step 7/9. The chain is Histidinol-phosphate aminotransferase from Thermoanaerobacter pseudethanolicus (strain ATCC 33223 / 39E) (Clostridium thermohydrosulfuricum).